A 252-amino-acid chain; its full sequence is Triosephosphate isomerase (252 aa).

A substrate-binding site is contributed by 10 to 12; it reads NWK. The active-site Electrophile is the H96. The active-site Proton acceptor is the E168. Residues G174, S214, and 235–236 each bind substrate; that span reads GG.

The protein belongs to the triosephosphate isomerase family. Homodimer.

It localises to the cytoplasm. The catalysed reaction is D-glyceraldehyde 3-phosphate = dihydroxyacetone phosphate. The protein operates within carbohydrate biosynthesis; gluconeogenesis. It participates in carbohydrate degradation; glycolysis; D-glyceraldehyde 3-phosphate from glycerone phosphate: step 1/1. Involved in the gluconeogenesis. Catalyzes stereospecifically the conversion of dihydroxyacetone phosphate (DHAP) to D-glyceraldehyde-3-phosphate (G3P). This chain is Triosephosphate isomerase, found in Streptococcus thermophilus (strain CNRZ 1066).